The primary structure comprises 589 residues: Probable peptidoglycan D,D-transpeptidase FtsI (589 aa).

A helical membrane pass occupies residues 47-67 (IFLVMGFFGFCFVGVSLGAGW). The active-site Acyl-ester intermediate is the Ser296.

Belongs to the transpeptidase family. Interacts with FtsN and FtsW.

The protein localises to the cell inner membrane. The enzyme catalyses Preferential cleavage: (Ac)2-L-Lys-D-Ala-|-D-Ala. Also transpeptidation of peptidyl-alanyl moieties that are N-acyl substituents of D-alanine.. The protein operates within cell wall biogenesis; peptidoglycan biosynthesis. In terms of biological role, catalyzes cross-linking of the peptidoglycan cell wall at the division septum. The polypeptide is Probable peptidoglycan D,D-transpeptidase FtsI (ftsI) (Caulobacter vibrioides (strain NA1000 / CB15N) (Caulobacter crescentus)).